The sequence spans 577 residues: Aspartate--tRNA(Asp/Asn) ligase (577 aa).

Glu171 lines the L-aspartate pocket. An aspartate region spans residues 195-198; the sequence is QLFK. Arg217 contributes to the L-aspartate binding site. ATP is bound by residues 217-219 and Gln226; that span reads RDE. His444 is an L-aspartate binding site. Residue Glu474 coordinates ATP. Arg481 contributes to the L-aspartate binding site. Position 526–529 (526–529) interacts with ATP; sequence GFDR.

Belongs to the class-II aminoacyl-tRNA synthetase family. Type 1 subfamily. As to quaternary structure, homodimer.

It localises to the cytoplasm. The enzyme catalyses tRNA(Asx) + L-aspartate + ATP = L-aspartyl-tRNA(Asx) + AMP + diphosphate. Its function is as follows. Aspartyl-tRNA synthetase with relaxed tRNA specificity since it is able to aspartylate not only its cognate tRNA(Asp) but also tRNA(Asn). Reaction proceeds in two steps: L-aspartate is first activated by ATP to form Asp-AMP and then transferred to the acceptor end of tRNA(Asp/Asn). The sequence is that of Aspartate--tRNA(Asp/Asn) ligase from Helicobacter pylori (strain G27).